The sequence spans 561 residues: BTB/POZ domain-containing protein At2g46260 (561 aa).

2 disordered regions span residues 1–31 (MRGSNNTDLFDPKTEMDSNFSRHGSSSEGDF) and 100–119 (LTDNNQPDMDDAPGGDNLDD). Positions 17–28 (DSNFSRHGSSSE) are enriched in polar residues. Residues 107 to 119 (DMDDAPGGDNLDD) are compositionally biased toward acidic residues. One can recognise a BTB domain in the interval 143–212 (IDCSTVVRVK…MYSNSLSVTT (70 aa)). One can recognise a BACK domain in the interval 266–358 (QPLTDAAKQF…YMTCRKLKKV (93 aa)).

It functions in the pathway protein modification; protein ubiquitination. In terms of biological role, may act as a substrate-specific adapter of an E3 ubiquitin-protein ligase complex (CUL3-RBX1-BTB) which mediates the ubiquitination and subsequent proteasomal degradation of target proteins. The polypeptide is BTB/POZ domain-containing protein At2g46260 (Arabidopsis thaliana (Mouse-ear cress)).